The chain runs to 348 residues: Isopentenyl-diphosphate delta-isomerase (348 aa).

Arginine 5 to lysine 6 contributes to the substrate binding site. FMN is bound by residues serine 61, serine 62–threonine 64, serine 92, and asparagine 120. Residue serine 92–arginine 94 participates in substrate binding. Residue glutamine 159 coordinates substrate. Glutamate 160 lines the Mg(2+) pocket. FMN-binding positions include lysine 189, serine 214, threonine 219, glycine 269 to arginine 271, and alanine 290 to arginine 291.

Belongs to the IPP isomerase type 2 family. As to quaternary structure, homooctamer. Dimer of tetramers. FMN serves as cofactor. NADPH is required as a cofactor. Requires Mg(2+) as cofactor.

The protein resides in the cytoplasm. It carries out the reaction isopentenyl diphosphate = dimethylallyl diphosphate. Involved in the biosynthesis of isoprenoids. Catalyzes the 1,3-allylic rearrangement of the homoallylic substrate isopentenyl (IPP) to its allylic isomer, dimethylallyl diphosphate (DMAPP). The chain is Isopentenyl-diphosphate delta-isomerase from Thermoplasma acidophilum (strain ATCC 25905 / DSM 1728 / JCM 9062 / NBRC 15155 / AMRC-C165).